The sequence spans 347 residues: Selenide, water dikinase (347 aa).

Sec17 is an active-site residue. Sec17 is a non-standard amino acid (selenocysteine). Residues Lys20 and 48–50 (TAD) contribute to the ATP site. A Mg(2+)-binding site is contributed by Asp51. Residues Asp68, Asp91, and 139-141 (GHS) contribute to the ATP site. Position 91 (Asp91) interacts with Mg(2+). A Mg(2+)-binding site is contributed by Asp227.

This sequence belongs to the selenophosphate synthase 1 family. Class I subfamily. As to quaternary structure, homodimer. It depends on Mg(2+) as a cofactor.

The enzyme catalyses hydrogenselenide + ATP + H2O = selenophosphate + AMP + phosphate + 2 H(+). Functionally, synthesizes selenophosphate from selenide and ATP. The sequence is that of Selenide, water dikinase from Haemophilus influenzae (strain 86-028NP).